A 198-amino-acid chain; its full sequence is Nucleoid occlusion factor SlmA (198 aa).

In terms of domain architecture, HTH tetR-type spans arginine 9 to leucine 70. Residues threonine 33 to phenylalanine 52 constitute a DNA-binding region (H-T-H motif). Residues glutamate 117 to arginine 144 are a coiled coil.

The protein belongs to the nucleoid occlusion factor SlmA family. In terms of assembly, homodimer. Interacts with FtsZ.

It localises to the cytoplasm. The protein resides in the nucleoid. Its function is as follows. Required for nucleoid occlusion (NO) phenomenon, which prevents Z-ring formation and cell division over the nucleoid. Acts as a DNA-associated cell division inhibitor that binds simultaneously chromosomal DNA and FtsZ, and disrupts the assembly of FtsZ polymers. SlmA-DNA-binding sequences (SBS) are dispersed on non-Ter regions of the chromosome, preventing FtsZ polymerization at these regions. The polypeptide is Nucleoid occlusion factor SlmA (Edwardsiella ictaluri (strain 93-146)).